A 267-amino-acid polypeptide reads, in one-letter code: Formamidopyrimidine-DNA glycosylase (267 aa).

Residue Pro-2 is the Schiff-base intermediate with DNA of the active site. The Proton donor role is filled by Glu-3. Residue Lys-58 is the Proton donor; for beta-elimination activity of the active site. The DNA site is built by His-91, Arg-110, and Arg-152. The segment at 233 to 267 (DVYGRGTDACTRCGGALEEIRLGNRSTVFCPRCQT) adopts an FPG-type zinc-finger fold. The active-site Proton donor; for delta-elimination activity is Arg-257.

Belongs to the FPG family. As to quaternary structure, monomer. Requires Zn(2+) as cofactor.

The catalysed reaction is Hydrolysis of DNA containing ring-opened 7-methylguanine residues, releasing 2,6-diamino-4-hydroxy-5-(N-methyl)formamidopyrimidine.. It carries out the reaction 2'-deoxyribonucleotide-(2'-deoxyribose 5'-phosphate)-2'-deoxyribonucleotide-DNA = a 3'-end 2'-deoxyribonucleotide-(2,3-dehydro-2,3-deoxyribose 5'-phosphate)-DNA + a 5'-end 5'-phospho-2'-deoxyribonucleoside-DNA + H(+). In terms of biological role, involved in base excision repair of DNA damaged by oxidation or by mutagenic agents. Acts as a DNA glycosylase that recognizes and removes damaged bases. Has a preference for oxidized purines, such as 7,8-dihydro-8-oxoguanine (8-oxoG). Has AP (apurinic/apyrimidinic) lyase activity and introduces nicks in the DNA strand. Cleaves the DNA backbone by beta-delta elimination to generate a single-strand break at the site of the removed base with both 3'- and 5'-phosphates. This is Formamidopyrimidine-DNA glycosylase from Geobacter metallireducens (strain ATCC 53774 / DSM 7210 / GS-15).